Consider the following 348-residue polypeptide: Ion-translocating oxidoreductase complex subunit D (348 aa).

The Cytoplasmic segment spans residues 1–22 (MAFFIASSPHLRSKRSTADVMR). 2 helical membrane passes run 23-43 (WVLVCALPGLIAQTYFFGYGT) and 44-64 (LIQLLLAISVAVALEAGIMLL). Topologically, residues 65–71 (RKRSPIS) are cytoplasmic. Residues 72 to 91 (ALRDYSAVVTAWLLAVAIPP) traverse the membrane as a helical segment. Topologically, residues 92–94 (LSP) are periplasmic. A helical transmembrane segment spans residues 95–117 (WWVVVIGLIFAIVIAKHLYGGLG). Residues 118–125 (QNPFNPAM) are Cytoplasmic-facing. A helical transmembrane segment spans residues 126–146 (IAYVVLLISFPVQMTSWMAPI). At 147-213 (KLTAEPSSLV…ETLTQPQFSG (67 aa)) the chain is on the periplasmic side. Thr187 is subject to FMN phosphoryl threonine. The chain crosses the membrane as a helical span at residues 214 to 234 (FAGIGWEWVNIAYLLGGLILL). The Cytoplasmic portion of the chain corresponds to 235 to 242 (KLRIIRWH). Residues 243–263 (IPVAMLAGLVFTALLAQLFAP) traverse the membrane as a helical segment. Topologically, residues 264-265 (GT) are periplasmic. The helical transmembrane segment at 266 to 286 (TASPMIHLLSGATMLGAFFIA) threads the bilayer. The Cytoplasmic segment spans residues 287 to 299 (TDPVSASTTDKGR). The next 2 membrane-spanning stretches (helical) occupy residues 300–320 (LIYGFFIGAMVFLIRSWGGFP) and 321–341 (DGVAFAVLLANMCVPLIDYYT). Topologically, residues 342 to 348 (KPRTYGH) are cytoplasmic.

This sequence belongs to the NqrB/RnfD family. As to quaternary structure, the complex is composed of six subunits: RnfA, RnfB, RnfC, RnfD, RnfE and RnfG. The cofactor is FMN.

The protein resides in the cell inner membrane. Functionally, part of a membrane-bound complex that couples electron transfer with translocation of ions across the membrane. This is Ion-translocating oxidoreductase complex subunit D from Vibrio cholerae serotype O1 (strain ATCC 39541 / Classical Ogawa 395 / O395).